Consider the following 378-residue polypeptide: Carbamoyl phosphate synthase small chain (378 aa).

The segment at 1-189 (MTKPAILALA…DSHPTIDAAD (189 aa)) is CPSase. The L-glutamine site is built by serine 47, glycine 241, and glycine 243. The Glutamine amidotransferase type-1 domain maps to 193–378 (HVVAFDYGVK…RFTDAMAKRR (186 aa)). Catalysis depends on cysteine 269, which acts as the Nucleophile. Leucine 270, glutamine 273, asparagine 311, glycine 313, and phenylalanine 314 together coordinate L-glutamine. Catalysis depends on residues histidine 353 and glutamate 355.

It belongs to the CarA family. As to quaternary structure, composed of two chains; the small (or glutamine) chain promotes the hydrolysis of glutamine to ammonia, which is used by the large (or ammonia) chain to synthesize carbamoyl phosphate. Tetramer of heterodimers (alpha,beta)4.

It catalyses the reaction hydrogencarbonate + L-glutamine + 2 ATP + H2O = carbamoyl phosphate + L-glutamate + 2 ADP + phosphate + 2 H(+). It carries out the reaction L-glutamine + H2O = L-glutamate + NH4(+). Its pathway is amino-acid biosynthesis; L-arginine biosynthesis; carbamoyl phosphate from bicarbonate: step 1/1. It participates in pyrimidine metabolism; UMP biosynthesis via de novo pathway; (S)-dihydroorotate from bicarbonate: step 1/3. Functionally, small subunit of the glutamine-dependent carbamoyl phosphate synthetase (CPSase). CPSase catalyzes the formation of carbamoyl phosphate from the ammonia moiety of glutamine, carbonate, and phosphate donated by ATP, constituting the first step of 2 biosynthetic pathways, one leading to arginine and/or urea and the other to pyrimidine nucleotides. The small subunit (glutamine amidotransferase) binds and cleaves glutamine to supply the large subunit with the substrate ammonia. This is Carbamoyl phosphate synthase small chain from Pseudomonas putida (strain ATCC 47054 / DSM 6125 / CFBP 8728 / NCIMB 11950 / KT2440).